Consider the following 481-residue polypeptide: Ribulose bisphosphate carboxylase large chain (481 aa).

Residues 1 to 2 (MS) constitute a propeptide that is removed on maturation. Pro3 is modified (N-acetylproline). At Lys14 the chain carries N6,N6,N6-trimethyllysine. Substrate is bound by residues Asn123 and Thr173. The active-site Proton acceptor is Lys175. A substrate-binding site is contributed by Lys177. Residues Lys201, Asp203, and Glu204 each contribute to the Mg(2+) site. Residue Lys201 is modified to N6-carboxylysine. His294 (proton acceptor) is an active-site residue. Arg295, His327, and Ser379 together coordinate substrate.

It belongs to the RuBisCO large chain family. Type I subfamily. Heterohexadecamer of 8 large chains and 8 small chains; disulfide-linked. The disulfide link is formed within the large subunit homodimers. Requires Mg(2+) as cofactor. Post-translationally, the disulfide bond which can form in the large chain dimeric partners within the hexadecamer appears to be associated with oxidative stress and protein turnover.

The protein resides in the plastid. It is found in the chloroplast. It catalyses the reaction 2 (2R)-3-phosphoglycerate + 2 H(+) = D-ribulose 1,5-bisphosphate + CO2 + H2O. The catalysed reaction is D-ribulose 1,5-bisphosphate + O2 = 2-phosphoglycolate + (2R)-3-phosphoglycerate + 2 H(+). Its function is as follows. RuBisCO catalyzes two reactions: the carboxylation of D-ribulose 1,5-bisphosphate, the primary event in carbon dioxide fixation, as well as the oxidative fragmentation of the pentose substrate in the photorespiration process. Both reactions occur simultaneously and in competition at the same active site. The chain is Ribulose bisphosphate carboxylase large chain from Coffea arabica (Arabian coffee).